Reading from the N-terminus, the 309-residue chain is tRNA dimethylallyltransferase (309 aa).

ATP is bound at residue 13 to 20; sequence GPTAVGKS. 15–20 contacts substrate; the sequence is TAVGKS.

This sequence belongs to the IPP transferase family. Monomer. Mg(2+) serves as cofactor.

The catalysed reaction is adenosine(37) in tRNA + dimethylallyl diphosphate = N(6)-dimethylallyladenosine(37) in tRNA + diphosphate. Catalyzes the transfer of a dimethylallyl group onto the adenine at position 37 in tRNAs that read codons beginning with uridine, leading to the formation of N6-(dimethylallyl)adenosine (i(6)A). The polypeptide is tRNA dimethylallyltransferase (Lacticaseibacillus paracasei (strain ATCC 334 / BCRC 17002 / CCUG 31169 / CIP 107868 / KCTC 3260 / NRRL B-441) (Lactobacillus paracasei)).